A 191-amino-acid polypeptide reads, in one-letter code: Protein GrpE (191 aa).

Residues 1–10 (MNHEEQKVET) show a composition bias toward basic and acidic residues. A disordered region spans residues 1–28 (MNHEEQKVETMEQVEAQPVEPTDVDSEV).

The protein belongs to the GrpE family. In terms of assembly, homodimer.

Its subcellular location is the cytoplasm. In terms of biological role, participates actively in the response to hyperosmotic and heat shock by preventing the aggregation of stress-denatured proteins, in association with DnaK and GrpE. It is the nucleotide exchange factor for DnaK and may function as a thermosensor. Unfolded proteins bind initially to DnaJ; upon interaction with the DnaJ-bound protein, DnaK hydrolyzes its bound ATP, resulting in the formation of a stable complex. GrpE releases ADP from DnaK; ATP binding to DnaK triggers the release of the substrate protein, thus completing the reaction cycle. Several rounds of ATP-dependent interactions between DnaJ, DnaK and GrpE are required for fully efficient folding. This is Protein GrpE from Aeromonas salmonicida (strain A449).